Here is a 278-residue protein sequence, read N- to C-terminus: Formamidopyrimidine-DNA glycosylase (278 aa).

Pro2 serves as the catalytic Schiff-base intermediate with DNA. The active-site Proton donor is the Glu3. Lys60 functions as the Proton donor; for beta-elimination activity in the catalytic mechanism. DNA is bound by residues His95 and Arg114. Residues 244-278 (WVYRRGGEPCRRCGTIIRRDKLSGRSTHWCPTCQG) form an FPG-type zinc finger. Residue Arg268 is the Proton donor; for delta-elimination activity of the active site.

Belongs to the FPG family. In terms of assembly, monomer. The cofactor is Zn(2+).

The enzyme catalyses Hydrolysis of DNA containing ring-opened 7-methylguanine residues, releasing 2,6-diamino-4-hydroxy-5-(N-methyl)formamidopyrimidine.. The catalysed reaction is 2'-deoxyribonucleotide-(2'-deoxyribose 5'-phosphate)-2'-deoxyribonucleotide-DNA = a 3'-end 2'-deoxyribonucleotide-(2,3-dehydro-2,3-deoxyribose 5'-phosphate)-DNA + a 5'-end 5'-phospho-2'-deoxyribonucleoside-DNA + H(+). Its function is as follows. Involved in base excision repair of DNA damaged by oxidation or by mutagenic agents. Acts as a DNA glycosylase that recognizes and removes damaged bases. Has a preference for oxidized purines, such as 7,8-dihydro-8-oxoguanine (8-oxoG). Has AP (apurinic/apyrimidinic) lyase activity and introduces nicks in the DNA strand. Cleaves the DNA backbone by beta-delta elimination to generate a single-strand break at the site of the removed base with both 3'- and 5'-phosphates. This is Formamidopyrimidine-DNA glycosylase from Parasynechococcus marenigrum (strain WH8102).